The chain runs to 86 residues: Small ribosomal subunit protein bS16 (86 aa).

This sequence belongs to the bacterial ribosomal protein bS16 family.

The polypeptide is Small ribosomal subunit protein bS16 (Legionella pneumophila (strain Paris)).